A 197-amino-acid chain; its full sequence is MEARRLAILCSHLNPPGPNPTRDPTLRVSDCSSGSSGDGKVESSTLQNDCVFCKIIRGESPCLKLYEDDMCLCILDTNPLSHGHSLIIPKLHYPTLEETPPSVVAAMCSKVPLISNAIVKATGSDSFNLLVNNGAAAGQVIFHTHIHIIPRKERDCLWASESLRRHSLKLDKEASQLVSCVRRHLCSLPEEQLVQPS.

The tract at residues 14-43 is disordered; the sequence is NPPGPNPTRDPTLRVSDCSSGSSGDGKVES. The HIT domain occupies 51 to 158; the sequence is VFCKIIRGES…IPRKERDCLW (108 aa). The Histidine triad motif motif lies at 143–147; it reads HTHIH. The active-site Tele-AMP-histidine intermediate is histidine 145. Histidine 147 contacts substrate.

The protein resides in the peroxisome. The catalysed reaction is adenosine 5'-phosphosulfate + H2O = sulfate + AMP + 2 H(+). Its function is as follows. Possesses adenylylsulfatase activity in vitro. The polypeptide is Adenylylsulfatase HINT3 (Arabidopsis thaliana (Mouse-ear cress)).